Here is a 132-residue protein sequence, read N- to C-terminus: Interleukin-4 (132 aa).

A signal peptide spans 1–24 (MGLTSQLIPTLVCLLALTSTFVHG). N-linked (GlcNAc...) asparagine glycans are attached at residues N28, N45, N62, N83, N95, and N101. 2 disulfides stabilise this stretch: C48–C84 and C70–C104.

This sequence belongs to the IL-4/IL-13 family.

It is found in the secreted. Participates in at least several B-cell activation processes as well as of other cell types. It is a costimulator of DNA-synthesis. It induces the expression of class II MHC molecules on resting B-cells. It enhances both secretion and cell surface expression of IgE and IgG1. It also regulates the expression of the low affinity Fc receptor for IgE (CD23) on both lymphocytes and monocytes. Positively regulates IL31RA expression in macrophages. Stimulates autophagy in dendritic cells by interfering with mTORC1 signaling and through the induction of RUFY4. The protein is Interleukin-4 (IL4) of Canis lupus familiaris (Dog).